An 804-amino-acid polypeptide reads, in one-letter code: Cas scaffolding protein family member 4 (804 aa).

The region spanning 11-73 (PKTLLARALY…PANRLQVLRE (63 aa)) is the SH3 domain. A phosphoserine mark is found at S200 and S297. 3 disordered regions span residues 369–395 (LERG…DSDR), 607–628 (QRET…TEHS), and 642–686 (QQSP…TERK). Residues 380 to 390 (PWISGQTSFLS) are compositionally biased toward polar residues. A compositionally biased stretch (basic and acidic residues) spans 649 to 664 (EKGKPTMEGKSNRNPD).

It belongs to the CAS family. As to quaternary structure, interacts (via SH3 domain) with PTK2/FAK1 (via C-terminus). Post-translationally, phosphorylated on tyrosines by SRC.

It localises to the cytoplasm. The protein resides in the cytoskeleton. The protein localises to the cell junction. Its subcellular location is the focal adhesion. In terms of biological role, docking protein that plays a role in tyrosine kinase-based signaling related to cell adhesion and cell spreading. Regulates PTK2/FAK1 activity, focal adhesion integrity, and cell spreading. The sequence is that of Cas scaffolding protein family member 4 from Mus musculus (Mouse).